A 630-amino-acid polypeptide reads, in one-letter code: Chaperone protein HtpG (630 aa).

Positions 1–341 (MTQNATSETL…SADLPLNVSR (341 aa)) are a; substrate-binding. A b region spans residues 342-558 (EILQESRDVR…QNDLSPHLLR (217 aa)). A c region spans residues 559–630 (MLKAAGQEVP…KRLNALLLKV (72 aa)).

Belongs to the heat shock protein 90 family. Homodimer.

It is found in the cytoplasm. Molecular chaperone. Has ATPase activity. This chain is Chaperone protein HtpG, found in Bordetella avium (strain 197N).